We begin with the raw amino-acid sequence, 305 residues long: D-alanine--D-alanine ligase (305 aa).

The 193-residue stretch at 107–299 (KKMLCYHGIA…FDELVERILA (193 aa)) folds into the ATP-grasp domain. 134 to 186 (PDYPLVVKPAREGSTIGISIVHDEQELAAGLEEAFRHDDLVLVEQFIAGAEVT) serves as a coordination point for ATP. 3 residues coordinate Mg(2+): Asp-254, Glu-266, and Asn-268.

Belongs to the D-alanine--D-alanine ligase family. Requires Mg(2+) as cofactor. The cofactor is Mn(2+).

The protein resides in the cytoplasm. It carries out the reaction 2 D-alanine + ATP = D-alanyl-D-alanine + ADP + phosphate + H(+). Its pathway is cell wall biogenesis; peptidoglycan biosynthesis. Its function is as follows. Cell wall formation. This chain is D-alanine--D-alanine ligase, found in Syntrophotalea carbinolica (strain DSM 2380 / NBRC 103641 / GraBd1) (Pelobacter carbinolicus).